The following is a 171-amino-acid chain: uncharacterized protein (171 aa).

Disordered stretches follow at residues 68 to 124 (NKNN…ASQQ) and 140 to 171 (GDED…SIKN). Basic and acidic residues predominate over residues 141 to 160 (DEDKGMDSTLKLPERTKRDS).

This sequence belongs to the asfivirus H171R family.

It is found in the virion. This is an uncharacterized protein from Ornithodoros (relapsing fever ticks).